The sequence spans 115 residues: Large ribosomal subunit protein bL20 (115 aa).

Belongs to the bacterial ribosomal protein bL20 family.

Functionally, binds directly to 23S ribosomal RNA and is necessary for the in vitro assembly process of the 50S ribosomal subunit. It is not involved in the protein synthesizing functions of that subunit. The polypeptide is Large ribosomal subunit protein bL20 (Myxococcus xanthus (strain DK1622)).